Here is a 137-residue protein sequence, read N- to C-terminus: Golgin subfamily A member 7 (137 aa).

S-palmitoyl cysteine attachment occurs at residues Cys-69 and Cys-72.

Belongs to the ERF4 family. As to quaternary structure, interacts with GOLGA3. Interacts with ZDHHC9. In terms of processing, palmitoylated on Cys-69 and Cys-72; which is required for Golgi localization and interaction with GOLGA3.

Its subcellular location is the golgi apparatus membrane. Functionally, may be involved in protein transport from Golgi to cell surface. The ZDHHC9-GOLGA7 complex is a palmitoyltransferase specific for HRAS and NRAS. In Rattus norvegicus (Rat), this protein is Golgin subfamily A member 7 (Golga7).